Consider the following 96-residue polypeptide: Large ribosomal subunit protein uL23 (96 aa).

The protein belongs to the universal ribosomal protein uL23 family. In terms of assembly, part of the 50S ribosomal subunit. Contacts protein L29, and trigger factor when it is bound to the ribosome.

Functionally, one of the early assembly proteins it binds 23S rRNA. One of the proteins that surrounds the polypeptide exit tunnel on the outside of the ribosome. Forms the main docking site for trigger factor binding to the ribosome. The chain is Large ribosomal subunit protein uL23 from Enterococcus faecalis (strain ATCC 700802 / V583).